We begin with the raw amino-acid sequence, 91 residues long: MAVKIRLKRMGSKRKPFYRIVVADSRSPRDGRFIEAVGYYNPLTNPVDLKLNEEDILNWLQKGAQPSDTVRNLLGSKGIMQKYHEARFAKK.

It belongs to the bacterial ribosomal protein bS16 family.

The chain is Small ribosomal subunit protein bS16 from Lacticaseibacillus casei (strain BL23) (Lactobacillus casei).